Reading from the N-terminus, the 1079-residue chain is BRD4-interacting chromatin-remodeling complex-associated protein-like (1079 aa).

Disordered regions lie at residues 51 to 79 and 509 to 604; these read NSSN…LPLS and LHLS…TPGT. The span at 68 to 79 shows a compositional bias: low complexity; it reads LGEGPSDGLPLS. Over residues 544-576 the composition is skewed to polar residues; that stretch reads SSASTAHPSLGSAVQSGSSGSNFTGDQLTQPNR. Residues 590–604 are compositionally biased toward low complexity; that stretch reads SSSKSTSTFSNTPGT. At serine 623 the chain carries Phosphoserine. 3 disordered regions span residues 669–691, 837–877, and 917–954; these read EKVV…GGQK, TQFG…NHDQ, and TSEE…TESK. Basic and acidic residues-rich tracts occupy residues 918 to 928 and 938 to 952; these read SEEKASRREPL and EGHR…HGTE. Phosphoserine is present on serine 980.

In terms of assembly, component of the multiprotein chromatin-remodeling complexes SWI/SNF: SWI/SNF-A (BAF), SWI/SNF-B (PBAF) and related complexes. The canonical complex contains a catalytic subunit (either SMARCA4/BRG1/BAF190A or SMARCA2/BRM/BAF190B) and at least SMARCE1, ACTL6A/BAF53, SMARCC1/BAF155, SMARCC2/BAF170, and SMARCB1/SNF5/BAF47. Other subunits specific to each of the complexes may also be present permitting several possible combinations developmentally and tissue specific. Component of the SWI/SNF (GBAF) subcomplex, which includes at least BICRA or BICRAL (mutually exclusive), BRD9, SS18, the core BAF subunits, SMARCA2/BRM, SMARCA4/BRG1/BAF190A, ACTL6A/BAF53, SMARCC1/BAF155, and SMARCD1/BAF60A.

Functionally, component of SWI/SNF chromatin remodeling subcomplex GBAF that carries out key enzymatic activities, changing chromatin structure by altering DNA-histone contacts within a nucleosome in an ATP-dependent manner. The polypeptide is BRD4-interacting chromatin-remodeling complex-associated protein-like (Homo sapiens (Human)).